Here is a 186-residue protein sequence, read N- to C-terminus: Ribosome-recycling factor (186 aa).

The protein belongs to the RRF family.

The protein localises to the cytoplasm. Its function is as follows. Responsible for the release of ribosomes from messenger RNA at the termination of protein biosynthesis. May increase the efficiency of translation by recycling ribosomes from one round of translation to another. The chain is Ribosome-recycling factor from Paracidovorax citrulli (strain AAC00-1) (Acidovorax citrulli).